The sequence spans 445 residues: Maltoporin (445 aa).

A signal peptide spans 1 to 24; it reads MITLRKLPLAVAVAAGVMSAQAMA.

Belongs to the porin LamB (TC 1.B.3) family. Homotrimer formed of three 18-stranded antiparallel beta-barrels, containing three independent channels.

It localises to the cell outer membrane. The enzyme catalyses beta-maltose(in) = beta-maltose(out). Functionally, involved in the transport of maltose and maltodextrins. In Shigella flexneri, this protein is Maltoporin.